We begin with the raw amino-acid sequence, 66 residues long: Large ribosomal subunit protein bL31 (66 aa).

Cys16, Cys18, Cys36, and Cys39 together coordinate Zn(2+).

Belongs to the bacterial ribosomal protein bL31 family. Type A subfamily. As to quaternary structure, part of the 50S ribosomal subunit. Zn(2+) is required as a cofactor.

Functionally, binds the 23S rRNA. This Campylobacter curvus (strain 525.92) protein is Large ribosomal subunit protein bL31.